Here is a 314-residue protein sequence, read N- to C-terminus: MGAGDKTAAGMPRIGMGTAVQGPKPDPIRRAVLRAIEVGYRHFDTAAHYETEAPIGEAAAEAVRSGAVASRDDLFITSKLWCSDAHRDRVVPALRQTLRNLQMEYVDLYLVHWPVSMKPGRFKAPFTAEDFVPFDMRAVWEAMEECHRLGLAKAIGVANFSCKKLETLLSFATIPPTVNQVEVNPVWQQRKLREFCRGKGIQLCAYSPLGAKGTHWGSDAVMDAGVLQEIAASRGKSVAQVCLRWVYEQGDCLIVKSFDEARMRENLDVDGWELTEEEHRRIAEIPQRKINLGKRYVSEHGPYKSLEELWDGEI.

Residues 1 to 21 (MGAGDKTAAGMPRIGMGTAVQ) are disordered. Residue aspartate 44 coordinates NADP(+). Tyrosine 49 serves as the catalytic Proton donor. Histidine 112 is a substrate binding site. Residues 158-159 (AN), glutamine 180, 258-266 (FDEARMREN), and 273-281 (ELTEEEHRR) each bind NADP(+).

Belongs to the aldo/keto reductase family. In terms of tissue distribution, mostly expressed in root tissues, observed in mesocotyl and embryonic roots, seedling roots, crown and seedling leafes, mature bracts, anthers, pistil, caryopsis and embryos.

It carries out the reaction 2'-deoxymugineate + NAD(+) = 3''-deamino-3''-oxonicotianamine + NADH + H(+). The catalysed reaction is 2'-deoxymugineate + NADP(+) = 3''-deamino-3''-oxonicotianamine + NADPH + H(+). The protein operates within siderophore biosynthesis. In terms of biological role, catalyzes the reduction of a 3''-keto intermediate during the biosynthesis of 2'-deoxymugineic acid (DMA) from L-Met. Involved in the formation of phytosiderophores (MAs) belonging to the mugineic acid family and required to acquire iron. This chain is Deoxymugineic acid synthase 1-A, found in Triticum aestivum (Wheat).